The primary structure comprises 278 residues: MTIYRFFKRSAFTLAYIYRRFHEEGCAYRATALAYTTLLALVPLTIVAFTLLSFVPAFQGVGVRLQNLIWENFVPTSAGMVAAYLSQLTQNVTGLSIINIFFLGIVALLLMYNINRAFVAIWHTEHHFRLSLHFLIYFMVLLLSPFLLGAVMLLGTFLVQSPLVTDLIGWPYLGKGLLFVLPYVLIFITFTLFNWVLPSAKVKLSHAVIGGLVTTVLFELAKFAFTVYLKFFPTYRVIYGALSVIPIFLVWLYVSWTIILLGAVVSNVIACGIPEKYK.

A run of 7 helical transmembrane segments spans residues 38 to 58 (LLAL…VPAF), 68 to 88 (LIWE…LSQL), 92 to 112 (VTGL…LLMY), 134 to 154 (FLIY…VMLL), 177 to 197 (LLFV…NWVL), 207 to 227 (AVIG…AFTV), and 244 to 264 (VIPI…LGAV).

The protein belongs to the UPF0761 family.

It localises to the cell inner membrane. In Coxiella burnetii (strain RSA 493 / Nine Mile phase I), this protein is UPF0761 membrane protein CBU_1578.